Here is a 148-residue protein sequence, read N- to C-terminus: Snaclec 3 (148 aa).

Positions 1–23 (MGRFISVSFGLLVVFLSLSGTEA) are cleaved as a signal peptide. 3 disulfide bridges follow: Cys-27–Cys-38, Cys-55–Cys-144, and Cys-121–Cys-136. The C-type lectin domain occupies 34 to 145 (YDQNCYKVFT…CSSTHNFVCK (112 aa)).

It belongs to the snaclec family. Heterodimer; disulfide-linked.

The protein localises to the secreted. Interferes with one step of hemostasis (modulation of platelet aggregation, or coagulation cascade, for example). In Daboia siamensis (Eastern Russel's viper), this protein is Snaclec 3.